Reading from the N-terminus, the 109-residue chain is ATPase inhibitor, mitochondrial (109 aa).

A mitochondrion-targeting transit peptide spans Met-1–Phe-25. The disordered stretch occupies residues Gly-26–Gln-52. The N-terminal inhibitory region stretch occupies residues Gly-26–Gln-52. Positions Ala-69–Asp-109 form a coiled coil. Residues His-74 to Glu-106 form an antiparallel alpha-helical coiled coil region region. Lys-103 bears the N6-succinyllysine mark.

The protein belongs to the ATPase inhibitor family. Homodimer; represents the active form and is present at a pH value below 6.5. Homotetramer; represents the inactive form and is present at a pH value above 7.0.

It is found in the mitochondrion. Endogenous F(1)F(o)-ATPase inhibitor limiting ATP depletion when the mitochondrial membrane potential falls below a threshold and the F(1)F(o)-ATP synthase starts hydrolyzing ATP to pump protons out of the mitochondrial matrix. Required to avoid the consumption of cellular ATP when the F(1)F(o)-ATP synthase enzyme acts as an ATP hydrolase. Indirectly acts as a regulator of heme synthesis in erythroid tissues: regulates heme synthesis by modulating the mitochondrial pH and redox potential, allowing FECH to efficiently catalyze the incorporation of iron into protoporphyrin IX to produce heme. The protein is ATPase inhibitor, mitochondrial of Bos taurus (Bovine).